We begin with the raw amino-acid sequence, 103 residues long: ATP-dependent Clp protease adapter protein ClpS 2 (103 aa).

Belongs to the ClpS family. Binds to the N-terminal domain of the chaperone ClpA.

Its function is as follows. Involved in the modulation of the specificity of the ClpAP-mediated ATP-dependent protein degradation. This is ATP-dependent Clp protease adapter protein ClpS 2 from Agrobacterium fabrum (strain C58 / ATCC 33970) (Agrobacterium tumefaciens (strain C58)).